The sequence spans 105 residues: ATP-dependent Clp protease adapter protein ClpS (105 aa).

The disordered stretch occupies residues 1 to 27 (MVVMSAPTEPKSRPGTTGQRESAPEDV).

This sequence belongs to the ClpS family. In terms of assembly, binds to the N-terminal domain of the chaperone ClpA.

Involved in the modulation of the specificity of the ClpAP-mediated ATP-dependent protein degradation. The chain is ATP-dependent Clp protease adapter protein ClpS from Mycolicibacterium paratuberculosis (strain ATCC BAA-968 / K-10) (Mycobacterium paratuberculosis).